The primary structure comprises 447 residues: Putative branched-chain amino acid carrier protein SAUSA300_1300 (447 aa).

12 helical membrane passes run 6–26, 40–60, 74–94, 114–134, 143–163, 193–213, 229–249, 290–310, 326–346, 350–370, 382–402, and 417–437; these read WVIGFTLFAMFFGAGNLIFPP, ILAFVLTGIGLPLLGVIVGAL, PKFSILFLIIIYLTIGPLFAI, SSIALFIFTIIYFIVVLYICL, IGSLLTPLLLITILAMIIKGY, GYLTMDAIAAIAFSMIVVNAV, LTAGLIAAVALIFIYISLGYI, LLGIIVALACLTTACGLIVAV, FVLVFILMSFIIANQGLNAVI, IPVLSIVYPVAITVVLLILIA, IPVIIVFILSIFSVISKLGWL, and LEWFPVAIIATILGYLVGIFV.

This sequence belongs to the branched chain amino acid transporter family.

The protein resides in the cell membrane. In terms of biological role, component of the transport system for branched-chain amino acids (leucine, isoleucine and valine), which is coupled to a proton motive force (Potential). Contributes to NaCl tolerance. The protein is Putative branched-chain amino acid carrier protein SAUSA300_1300 of Staphylococcus aureus (strain USA300).